Reading from the N-terminus, the 188-residue chain is dITP/XTP pyrophosphatase (188 aa).

10–15 (TSNPHK) serves as a coordination point for substrate. Mg(2+)-binding residues include Glu39 and Asp69. Asp69 serves as the catalytic Proton acceptor. Substrate contacts are provided by residues Ser70, 145–148 (FGFD), Lys168, and 173–174 (HR).

This sequence belongs to the HAM1 NTPase family. As to quaternary structure, homodimer. Mg(2+) is required as a cofactor.

It carries out the reaction XTP + H2O = XMP + diphosphate + H(+). The enzyme catalyses dITP + H2O = dIMP + diphosphate + H(+). It catalyses the reaction ITP + H2O = IMP + diphosphate + H(+). Functionally, pyrophosphatase that catalyzes the hydrolysis of nucleoside triphosphates to their monophosphate derivatives, with a high preference for the non-canonical purine nucleotides XTP (xanthosine triphosphate), dITP (deoxyinosine triphosphate) and ITP. Seems to function as a house-cleaning enzyme that removes non-canonical purine nucleotides from the nucleotide pool, thus preventing their incorporation into DNA/RNA and avoiding chromosomal lesions. This chain is dITP/XTP pyrophosphatase, found in Ignicoccus hospitalis (strain KIN4/I / DSM 18386 / JCM 14125).